The sequence spans 144 residues: Na(+)/H(+) antiporter subunit B (144 aa).

Transmembrane regions (helical) follow at residues 9–31, 41–58, 75–97, and 117–139; these read VLLH…YLFF, FIGG…YLGF, IAFG…DPYL, and ALPF…ILTI.

This sequence belongs to the CPA3 antiporters (TC 2.A.63) subunit B family. In terms of assembly, forms a heterooligomeric complex that consists of seven subunits: MrpA, MrpB, MrpC, MrpD, MrpE, MrpF and MrpG.

Its subcellular location is the cell membrane. Functionally, mnh complex is a Na(+)Li(+)/H(+) antiporter involved in Na(+) and/or Li(+) excretion and Na(+) resistance. Na(+)/H(+) antiport consumes a transmembrane electrical potential, and is thus inferred to be electrogenic. Does not transport K(+), Ca(2+) or Mg(2+). This is Na(+)/H(+) antiporter subunit B (mrpB) from Alkalihalophilus pseudofirmus (strain ATCC BAA-2126 / JCM 17055 / OF4) (Bacillus pseudofirmus).